A 154-amino-acid polypeptide reads, in one-letter code: Putative peroxiredoxin MT1643 (154 aa).

In terms of domain architecture, Thioredoxin spans 1 to 153 (MKTGDTVADF…ALATLRAIRS (153 aa)). Cysteine 44 (cysteine sulfenic acid (-SOH) intermediate) is an active-site residue. The cysteines at positions 44 and 49 are disulfide-linked.

The protein belongs to the peroxiredoxin family. BCP/PrxQ subfamily. As to quaternary structure, monomer.

It carries out the reaction a hydroperoxide + [thioredoxin]-dithiol = an alcohol + [thioredoxin]-disulfide + H2O. Functionally, thiol-specific peroxidase that catalyzes the reduction of hydrogen peroxide and organic hydroperoxides to water and alcohols, respectively. Plays a role in cell protection against oxidative stress by detoxifying peroxides and as sensor of hydrogen peroxide-mediated signaling events. The protein is Putative peroxiredoxin MT1643 (bcpB) of Mycobacterium tuberculosis (strain CDC 1551 / Oshkosh).